We begin with the raw amino-acid sequence, 229 residues long: Large ribosomal subunit protein uL1c (229 aa).

This sequence belongs to the universal ribosomal protein uL1 family. As to quaternary structure, part of the 50S ribosomal subunit.

It is found in the plastid. It localises to the chloroplast. Its function is as follows. Binds directly to 23S rRNA. Might be involved in E site tRNA release (Potential). The protein is Large ribosomal subunit protein uL1c (rpl1) of Porphyra purpurea (Red seaweed).